The chain runs to 118 residues: NADH-quinone oxidoreductase subunit A 2 (118 aa).

Transmembrane regions (helical) follow at residues 5–25 (YLPI…SVIF), 62–82 (LIAM…PWAV), and 87–107 (LGMF…VGYV).

It belongs to the complex I subunit 3 family. In terms of assembly, NDH-1 is composed of 14 different subunits. Subunits NuoA, H, J, K, L, M, N constitute the membrane sector of the complex.

It is found in the cell inner membrane. It carries out the reaction a quinone + NADH + 5 H(+)(in) = a quinol + NAD(+) + 4 H(+)(out). Its function is as follows. NDH-1 shuttles electrons from NADH, via FMN and iron-sulfur (Fe-S) centers, to quinones in the respiratory chain. The immediate electron acceptor for the enzyme in this species is believed to be ubiquinone. Couples the redox reaction to proton translocation (for every two electrons transferred, four hydrogen ions are translocated across the cytoplasmic membrane), and thus conserves the redox energy in a proton gradient. The sequence is that of NADH-quinone oxidoreductase subunit A 2 from Citrifermentans bemidjiense (strain ATCC BAA-1014 / DSM 16622 / JCM 12645 / Bem) (Geobacter bemidjiensis).